Reading from the N-terminus, the 421-residue chain is ATP-dependent RNA helicase eIF4A (421 aa).

The tract at residues 1–26 (MSNDKGLEEIPEDQSTTPHKPTSNVG) is disordered. A compositionally biased stretch (polar residues) spans 13 to 26 (DQSTTPHKPTSNVG). The Q motif signature appears at 48–76 (DSFDAMELKPELLRGVYAYGFERPSAIQQ). A Helicase ATP-binding domain is found at 79–249 (IKPIIKGSDV…TKFMRDPVRI (171 aa)). 92–99 (AQSGTGKT) contacts ATP. Positions 197 to 200 (DEAD) match the DEAD box motif. The region spanning 260–421 (GIKQFYIAVE…EMPMNVADLI (162 aa)) is the Helicase C-terminal domain.

This sequence belongs to the DEAD box helicase family. eIF4A subfamily. Component of the eIF4F complex, which composition varies with external and internal environmental conditions. It is composed of at least eIF4A, eIF4E and eIF4G.

It is found in the cytoplasm. The enzyme catalyses ATP + H2O = ADP + phosphate + H(+). Its function is as follows. ATP-dependent RNA helicase which is a subunit of the eIF4F complex involved in cap recognition and is required for mRNA binding to ribosome. In the current model of translation initiation, eIF4A unwinds RNA secondary structures in the 5'-UTR of mRNAs which is necessary to allow efficient binding of the small ribosomal subunit, and subsequent scanning for the initiator codon. This is ATP-dependent RNA helicase eIF4A (tif1) from Aspergillus oryzae (strain ATCC 42149 / RIB 40) (Yellow koji mold).